The sequence spans 334 residues: Atypical chemokine receptor 1 (334 aa).

At 1 to 61 (MGNCLYPVET…CNLLDRSSLP (61 aa)) the chain is on the extracellular side. Residues Asn16, Asn26, and Asn32 are each glycosylated (N-linked (GlcNAc...) asparagine). Cystine bridges form between Cys49-Cys274 and Cys127-Cys193. The chain crosses the membrane as a helical span at residues 62-82 (FFMLTSVLGMLASGSILFAIL). The Cytoplasmic portion of the chain corresponds to 83-93 (RPFFHWQICPS). Residues 94-114 (WPILAELAVGSALFSIAVPIL) traverse the membrane as a helical segment. Over 115–127 (APGLHSAHSTALC) the chain is Extracellular. The helical transmembrane segment at 128-151 (NLGYWVWYTSAFAQALLIGCYACL) threads the bilayer. Topologically, residues 152–164 (NPRLNIGQLRGFT) are cytoplasmic. A helical membrane pass occupies residues 165–185 (LGLSVGLWGAAALSGLPVALA). The Extracellular segment spans residues 186–205 (SDVYNGFCTFPSSRDMEALK). Residues 206–226 (YTHYAICFTIFTVLPLTLLAA) form a helical membrane-spanning segment. Over 227-242 (KGLKIALSKGPGPWVS) the chain is Cytoplasmic. The chain crosses the membrane as a helical span at residues 243-263 (VLWIWFIFWWPHGMVLIFDAL). Over 264–285 (VRSKTVLLYTCQSQKILDAMLN) the chain is Extracellular. Asn285 carries N-linked (GlcNAc...) asparagine glycosylation. A helical membrane pass occupies residues 286 to 306 (VTEALSMLHCVATPLLLALFC). Over 307–334 (HQTTRRSLSSLSLPTRQASQMDALAGKS) the chain is Cytoplasmic.

This sequence belongs to the G-protein coupled receptor 1 family. Atypical chemokine receptor subfamily. Expressed in liver and brain.

It localises to the early endosome. The protein resides in the recycling endosome. The protein localises to the membrane. In terms of biological role, atypical chemokine receptor that controls chemokine levels and localization via high-affinity chemokine binding that is uncoupled from classic ligand-driven signal transduction cascades, resulting instead in chemokine sequestration, degradation, or transcytosis. Also known as interceptor (internalizing receptor) or chemokine-scavenging receptor or chemokine decoy receptor. Has a promiscuous chemokine-binding profile, interacting with inflammatory chemokines of both the CXC and the CC subfamilies but not with homeostatic chemokines. Acts as a receptor for chemokines including CCL2, CCL5, CCL7, CCL11, CCL13, CCL14, CCL17, CXCL5, CXCL6, IL8/CXCL8, CXCL11, GRO, RANTES, MCP-1 and TARC. May regulate chemokine bioavailability and, consequently, leukocyte recruitment through two distinct mechanisms: when expressed in endothelial cells, it sustains the abluminal to luminal transcytosis of tissue-derived chemokines and their subsequent presentation to circulating leukocytes; when expressed in erythrocytes, serves as blood reservoir of cognate chemokines but also as a chemokine sink, buffering potential surges in plasma chemokine levels. Functionally, (Microbial infection) Acts as a receptor for the malaria parasite Plasmodium yoelii in mature erythrocytes but not reticulocytes. The sequence is that of Atypical chemokine receptor 1 (Ackr1) from Mus musculus (Mouse).